The following is a 430-amino-acid chain: Asparagine--tRNA ligase (430 aa).

The protein belongs to the class-II aminoacyl-tRNA synthetase family. In terms of assembly, homodimer.

The protein resides in the cytoplasm. It catalyses the reaction tRNA(Asn) + L-asparagine + ATP = L-asparaginyl-tRNA(Asn) + AMP + diphosphate + H(+). The sequence is that of Asparagine--tRNA ligase from Staphylococcus aureus (strain MRSA252).